A 753-amino-acid chain; its full sequence is 5-methyltetrahydropteroyltriglutamate--homocysteine methyltransferase (753 aa).

Residues 17–20 (RELK) and lysine 117 each bind 5-methyltetrahydropteroyltri-L-glutamate. L-homocysteine contacts are provided by residues 431–433 (IGS) and glutamate 484. L-methionine is bound by residues 431–433 (IGS) and glutamate 484. 5-methyltetrahydropteroyltri-L-glutamate-binding positions include 515 to 516 (RC) and tryptophan 561. An L-homocysteine-binding site is contributed by aspartate 599. Aspartate 599 lines the L-methionine pocket. Residue glutamate 605 participates in 5-methyltetrahydropteroyltri-L-glutamate binding. Zn(2+) is bound by residues histidine 641, cysteine 643, and glutamate 665. The active-site Proton donor is the histidine 694. Position 726 (cysteine 726) interacts with Zn(2+).

This sequence belongs to the vitamin-B12 independent methionine synthase family. Zn(2+) is required as a cofactor.

It carries out the reaction 5-methyltetrahydropteroyltri-L-glutamate + L-homocysteine = tetrahydropteroyltri-L-glutamate + L-methionine. It functions in the pathway amino-acid biosynthesis; L-methionine biosynthesis via de novo pathway; L-methionine from L-homocysteine (MetE route): step 1/1. Catalyzes the transfer of a methyl group from 5-methyltetrahydrofolate to homocysteine resulting in methionine formation. The protein is 5-methyltetrahydropteroyltriglutamate--homocysteine methyltransferase of Shigella boydii serotype 4 (strain Sb227).